The sequence spans 218 residues: Ribose-5-phosphate isomerase A (218 aa).

Residues 28–31 (TGST), 81–84 (DGAD), and 94–97 (KGGG) contribute to the substrate site. Catalysis depends on Glu103, which acts as the Proton acceptor. Lys121 is a substrate binding site.

The protein belongs to the ribose 5-phosphate isomerase family. Homodimer.

The catalysed reaction is aldehydo-D-ribose 5-phosphate = D-ribulose 5-phosphate. Its pathway is carbohydrate degradation; pentose phosphate pathway; D-ribose 5-phosphate from D-ribulose 5-phosphate (non-oxidative stage): step 1/1. Functionally, catalyzes the reversible conversion of ribose-5-phosphate to ribulose 5-phosphate. The protein is Ribose-5-phosphate isomerase A of Thioalkalivibrio sulfidiphilus (strain HL-EbGR7).